The sequence spans 283 residues: Movement protein (283 aa).

This sequence belongs to the cucumovirus movement protein family.

The protein localises to the host cell junction. It is found in the host plasmodesma. Transports viral genome to neighboring plant cells directly through plasmosdesmata, without any budding. The movement protein allows efficient cell to cell propagation, by bypassing the host cell wall barrier. Acts by forming a tubular structure at the host plasmodesmata, enlarging it enough to allow free passage of virion capsids. The protein is Movement protein of Cucumis sativus (Cucumber).